A 336-amino-acid polypeptide reads, in one-letter code: Phosphate acetyltransferase (336 aa).

Belongs to the phosphate acetyltransferase and butyryltransferase family.

Its subcellular location is the cytoplasm. The enzyme catalyses acetyl-CoA + phosphate = acetyl phosphate + CoA. It functions in the pathway metabolic intermediate biosynthesis; acetyl-CoA biosynthesis; acetyl-CoA from acetate: step 2/2. In Treponema pallidum (strain Nichols), this protein is Phosphate acetyltransferase (pta).